We begin with the raw amino-acid sequence, 201 residues long: Acyl-homoserine-lactone synthase (201 aa).

This sequence belongs to the autoinducer synthase family.

The enzyme catalyses a fatty acyl-[ACP] + S-adenosyl-L-methionine = an N-acyl-L-homoserine lactone + S-methyl-5'-thioadenosine + holo-[ACP] + H(+). Its function is as follows. Required for the synthesis of BHL (N-butanoyl-L-homoserine lactone), and HHL (N-hexanoyl-L-homoserine lactone) autoinducer molecules which bind to RhlR and thus acts in elastase biosynthesis regulation. The sequence is that of Acyl-homoserine-lactone synthase (rhlI) from Pseudomonas aeruginosa (strain ATCC 15692 / DSM 22644 / CIP 104116 / JCM 14847 / LMG 12228 / 1C / PRS 101 / PAO1).